A 436-amino-acid polypeptide reads, in one-letter code: uncharacterized protein (436 aa).

The chain crosses the membrane as a helical span at residues 1-21; that stretch reads MILLQVICTIWTCLFIPLLNA. BNR repeat units lie at residues 57-68 and 101-112; these read WISSDSGENWEA and YVTDDRGKSWRA. An N-linked (GlcNAc...) asparagine glycan is attached at Asn-157. 2 BNR repeats span residues 229 to 240 and 394 to 405; these read ALSTDGGKTFKK and KISVDNGLTWSN.

It localises to the membrane. This is an uncharacterized protein from Saccharomyces cerevisiae (strain ATCC 204508 / S288c) (Baker's yeast).